A 72-amino-acid chain; its full sequence is uncharacterized protein (72 aa).

Residues 51–72 (AKGGRQRGETVVVDDQCKEHKE) are disordered.

It belongs to the YiiE family.

This is an uncharacterized protein from Escherichia coli O6:K15:H31 (strain 536 / UPEC).